A 155-amino-acid chain; its full sequence is Small ribosomal subunit protein uS7cz/uS7cy (155 aa).

This sequence belongs to the universal ribosomal protein uS7 family. In terms of assembly, part of the 30S ribosomal subunit.

It localises to the plastid. The protein localises to the chloroplast. Functionally, one of the primary rRNA binding proteins, it binds directly to 16S rRNA where it nucleates assembly of the head domain of the 30S subunit. This chain is Small ribosomal subunit protein uS7cz/uS7cy (rps7-A), found in Ipomoea purpurea (Common morning glory).